Consider the following 86-residue polypeptide: Large ribosomal subunit protein bL31 (86 aa).

Positions Gly-66–Lys-86 are disordered. Positions Glu-77–Lys-86 are enriched in basic and acidic residues.

Belongs to the bacterial ribosomal protein bL31 family. Type A subfamily. Part of the 50S ribosomal subunit.

In terms of biological role, binds the 23S rRNA. The polypeptide is Large ribosomal subunit protein bL31 (Prochlorococcus marinus (strain MIT 9515)).